We begin with the raw amino-acid sequence, 658 residues long: Phosphomethylpyrimidine synthase (658 aa).

Residues 1-22 (MNNSTDAVNPAKKPQTRREKRE) are disordered. Substrate contacts are provided by residues asparagine 248, methionine 277, tyrosine 306, histidine 342, 362 to 364 (SRG), 403 to 406 (DGLR), and glutamate 442. Histidine 446 lines the Zn(2+) pocket. Tyrosine 469 contacts substrate. A Zn(2+)-binding site is contributed by histidine 510. Positions 590, 593, and 598 each coordinate [4Fe-4S] cluster.

It belongs to the ThiC family. Homodimer. [4Fe-4S] cluster is required as a cofactor.

The catalysed reaction is 5-amino-1-(5-phospho-beta-D-ribosyl)imidazole + S-adenosyl-L-methionine = 4-amino-2-methyl-5-(phosphooxymethyl)pyrimidine + CO + 5'-deoxyadenosine + formate + L-methionine + 3 H(+). Its pathway is cofactor biosynthesis; thiamine diphosphate biosynthesis. Functionally, catalyzes the synthesis of the hydroxymethylpyrimidine phosphate (HMP-P) moiety of thiamine from aminoimidazole ribotide (AIR) in a radical S-adenosyl-L-methionine (SAM)-dependent reaction. The polypeptide is Phosphomethylpyrimidine synthase (Colwellia psychrerythraea (strain 34H / ATCC BAA-681) (Vibrio psychroerythus)).